Here is a 715-residue protein sequence, read N- to C-terminus: MKSKSKTVPDVATLTKAKAKVELMRLALEIERHDKAYYQEDAPKVSDADYDALRRRLEEIEHKFPELVSGASPSQKVGAAPARGFAKVQHAVPMLSLGNAFSDDEVAEFLQRVRRFLNLGDEIPAIVAEPKIDGLSLSLRYEQGELVRAATRGDGSVGEDVTANVRTLKDIPHTLKGNRIPAACELRGEVYMLKSDFLALNKKQEEAGEAPFANPRNSAAGSLRQKDVAITASRPLKFFAYAWGEFSGETPERTQHDMLGWLDHAGFVVNPEITLCHSVDDALVFYRRIGEERAALPYDIDGVVYKVDRLDWQARLGFAGRAPRWAIAHKFAAEQATTILEKIEIQVGRTGALTPVARLAPVTVGGVVVQNATLHNEDYIKGVGNDGQPLREGRDIRVGDTVIIQRAGDVIPQVVDVVLDKRPADAVPYEFPQACPVCGSHAVREDGEVVRRCTGALICPAQAVERLKHFVSRLAFDIDGLGEKQIELFHERGWVKEPVDIFTLKTRNATLKLEELEGYGETSVRNLFAAIDARRTIELHRLIFALGIRHVGEGNAKLLARHYGTIDAFLGAMRAAAAGQTEEGNTSEAYQDLDNIGGIGDIVAEAVVEFFAEERNVEALDALLGELDEVLPAAQVKRDSAVAGKTVVFTGSLSKFTRDEAKAAAERLGAKVAGSVSKKTDFVVAGEDAGSKLTKARELGVSVLSEDEWLALIQG.

NAD(+) contacts are provided by residues 47-51 (DADYD), 96-97 (SL), and E129. K131 serves as the catalytic N6-AMP-lysine intermediate. NAD(+)-binding residues include R152, E189, K306, and K330. Zn(2+)-binding residues include C435, C438, C453, and C459. Residues 637–715 (KRDSAVAGKT…EDEWLALIQG (79 aa)) form the BRCT domain.

Belongs to the NAD-dependent DNA ligase family. LigA subfamily. The cofactor is Mg(2+). It depends on Mn(2+) as a cofactor.

The catalysed reaction is NAD(+) + (deoxyribonucleotide)n-3'-hydroxyl + 5'-phospho-(deoxyribonucleotide)m = (deoxyribonucleotide)n+m + AMP + beta-nicotinamide D-nucleotide.. Its function is as follows. DNA ligase that catalyzes the formation of phosphodiester linkages between 5'-phosphoryl and 3'-hydroxyl groups in double-stranded DNA using NAD as a coenzyme and as the energy source for the reaction. It is essential for DNA replication and repair of damaged DNA. This chain is DNA ligase, found in Rhodopseudomonas palustris (strain BisA53).